A 343-amino-acid chain; its full sequence is Selenide, water dikinase (343 aa).

The active site involves U16. U16 is a non-standard amino acid (selenocysteine). Residues K19 and 46–48 (GAE) contribute to the ATP site. D49 contacts Mg(2+). ATP is bound by residues D66, D89, and 137 to 139 (GHT). D89 is a binding site for Mg(2+). D225 is a binding site for Mg(2+).

Belongs to the selenophosphate synthase 1 family. Class I subfamily. Homodimer. It depends on Mg(2+) as a cofactor.

It carries out the reaction hydrogenselenide + ATP + H2O = selenophosphate + AMP + phosphate + 2 H(+). Functionally, synthesizes selenophosphate from selenide and ATP. The chain is Selenide, water dikinase from Citrifermentans bemidjiense (strain ATCC BAA-1014 / DSM 16622 / JCM 12645 / Bem) (Geobacter bemidjiensis).